A 326-amino-acid chain; its full sequence is mRNA decay activator protein ZFP36 (326 aa).

The interval 1–15 (MDLTAIYESLLSLSP) is necessary for nuclear export. Residues 1 to 100 (MDLTAIYESL…PTSPTATSTT (100 aa)) form a necessary and sufficient for the association with mRNA decay enzymes and mRNA decay activation region. Necessary for localization of ARE-containing mRNAs to processing bodies (PBs) regions lie at residues 1-174 (MDLT…DLAA) and 100-326 (TPSR…SVSE). The segment at 13-66 (LSPDVPVPSDHGGTESSPGWGSSGPWSLSPSDSSPSGVTSRLPGRSTSLVEGRS) is disordered. A compositionally biased stretch (low complexity) spans 28 to 49 (SSPGWGSSGPWSLSPSDSSPSG). Phosphoserine; by MAPKAPK2 is present on serine 60. Serine 66 carries the phosphoserine modification. Residues 71–75 (PPPPG) form a P-P-P-P-G repeat. The segment at 78-102 (PLAPRLGPELSPSPTSPTATSTTPS) is disordered. Residues serine 88 and serine 90 each carry the phosphoserine modification. Threonine 92 is subject to Phosphothreonine. Residue serine 93 is modified to Phosphoserine. Positions 95–168 (TATSTTPSRY…GSRCHFIHNP (74 aa)) are necessary for nuclear localization. A necessary for RNA-binding region spans residues 97-173 (TSTTPSRYKT…FIHNPSEDLA (77 aa)). C3H1-type zinc fingers lie at residues 103–131 (RYKTELCRTFSESGRCRYGAKCQFAHGLG) and 141–169 (KYKTELCHKFYLQGRCPYGSRCHFIHNPS). A necessary for interaction with PABPN1 region spans residues 103-194 (RYKTELCRTF…ISFSGLPSGR (92 aa)). Serine 169 bears the Phosphoserine mark. A necessary for mRNA decay activation region spans residues 174-326 (APGHPPVLRQ…PIFNRISVSE (153 aa)). Disordered regions lie at residues 175 to 245 (PGHP…RRDP) and 273 to 292 (SVQSLGSDPDEYASSGSSLG). Phosphoserine; by MAPKAPK2 is present on serine 186. Serine 197 is subject to Phosphoserine. The P-P-P-P-G repeat unit spans residues 198–202 (PPPPG). Residues 204-216 (AGPSLSSSSFSPS) show a composition bias toward low complexity. Serine 218 is subject to Phosphoserine. The stretch at 219 to 223 (PPPPG) is one P-P-P-P-G repeat. At serine 228 the chain carries Phosphoserine; by MAPK1; in vitro. Phosphoserine occurs at positions 276, 296, and 323. Positions 312–326 (APRRLPIFNRISVSE) are interaction with CNOT1.

As to quaternary structure, associates with cytoplasmic CCR4-NOT and PAN2-PAN3 deadenylase complexes to trigger ARE-containing mRNA deadenylation and decay processes. Part of a mRNA decay activation complex at least composed of poly(A)-specific exoribonucleases CNOT6, EXOSC2 and XRN1 and mRNA-decapping enzymes DCP1A and DCP2. Associates with the RNA exosome complex. Interacts (via phosphorylated form) with 14-3-3 proteins; these interactions promote exclusion of ZFP36 from cytoplasmic stress granules in response to arsenite treatment in a MAPKAPK2-dependent manner and does not prevent CCR4-NOT deadenylase complex recruitment or ZFP36-induced ARE-containing mRNA deadenylation and decay processes. Interacts with 14-3-3 proteins; these interactions occur in response to rapamycin in an Akt-dependent manner. Interacts with AGO2 and AGO4. Interacts (via C-terminus) with CNOT1; this interaction occurs in a RNA-independent manner and induces mRNA deadenylation. Interacts (via N-terminus) with CNOT6. Interacts with CNOT6L. Interacts (via C-terminus) with CNOT7; this interaction occurs in a RNA-independent manner, induces mRNA deadenylation and is inhibited in a phosphorylation MAPKAPK2-dependent manner. Interacts (via unphosphorylated form) with CNOT8; this interaction occurs in a RNA-independent manner and is inhibited in a phosphorylation MAPKAPK2-dependent manner. Interacts with DCP1A. Interacts (via N-terminus) with DCP2. Interacts with EDC3. Interacts (via N-terminus) with EXOSC2. Interacts with heat shock 70 kDa proteins. Interacts with KHSRP; this interaction increases upon cytokine-induced treatment. Interacts with MAP3K4; this interaction enhances the association with SH3KBP1/CIN85. Interacts with MAPKAPK2; this interaction occurs upon skeletal muscle satellite cell activation. Interacts with NCL. Interacts with NUP214; this interaction increases upon lipopolysaccharide (LPS) stimulation. Interacts with PABPC1; this interaction occurs in a RNA-dependent manner. Interacts (via hypophosphorylated form) with PABPN1 (via RRM domain and C-terminal arginine-rich region); this interaction occurs in the nucleus in a RNA-independent manner, decreases in presence of single-stranded poly(A) RNA-oligomer and in a p38 MAPK-dependent-manner and inhibits nuclear poly(A) tail synthesis. Interacts with PAN2. Interacts (via C3H1-type zinc finger domains) with PKM. Interacts (via C3H1-type zinc finger domains) with nuclear RNA poly(A) polymerase. Interacts with PPP2CA; this interaction occurs in LPS-stimulated cells and induces ZFP36 dephosphorylation, and hence may promote ARE-containing mRNAs decay. Interacts (via C-terminus) with PRR5L (via C-terminus); this interaction may accelerate ZFP36-mediated mRNA decay during stress. Interacts (via C-terminus) with SFN; this interaction occurs in a phosphorylation-dependent manner. Interacts (via extreme C-terminal region) with SH3KBP1/CIN85 (via SH3 domains); this interaction enhances MAP3K4-induced phosphorylation of ZFP36 at Ser-66 and Ser-93 and does not alter neither ZFP36 binding to ARE-containing transcripts nor TNF-alpha mRNA decay. Interacts with XRN1. Interacts (via C-terminus and Ser-186 phosphorylated form) with YWHAB; this interaction occurs in a p38/MAPKAPK2-dependent manner, increases cytoplasmic localization of ZFP36 and protects ZFP36 from Ser-186 dephosphorylation by serine/threonine phosphatase 2A, and hence may be crucial for stabilizing ARE-containing mRNAs. Interacts (via phosphorylated form) with YWHAE. Interacts (via C-terminus) with YWHAG; this interaction occurs in a phosphorylation-dependent manner. Interacts with YWHAH; this interaction occurs in a phosphorylation-dependent manner. Interacts with YWHAQ; this interaction occurs in a phosphorylation-dependent manner. Interacts with (via C-terminus) YWHAZ; this interaction occurs in a phosphorylation-dependent manner. Interacts (via P-P-P-P-G repeats) with GIGYF2; the interaction is direct. In terms of assembly, (Microbial infection) Interacts (via C-terminus) with HTLV-1 TAX (via C-terminus); this interaction inhibits HTLV-1 TAX to transactivate viral long terminal repeat (LTR) promoter. In terms of processing, phosphorylated. Phosphorylation at serine and/or threonine residues occurs in a p38 MAPK- and MAPKAPK2-dependent manner. Phosphorylated by MAPKAPK2 at Ser-60 and Ser-186; phosphorylation increases its stability and cytoplasmic localization, promotes binding to 14-3-3 adapter proteins and inhibits the recruitment of cytoplasmic CCR4-NOT and PAN2-PAN3 deadenylase complexes to the mRNA decay machinery, thereby inhibiting ZFP36-induced ARE-containing mRNA deadenylation and decay processes. Phosphorylation by MAPKAPK2 does not impair ARE-containing RNA-binding. Phosphorylated in a MAPKAPK2- and p38 MAPK-dependent manner upon skeletal muscle satellite cell activation; this phosphorylation inhibits ZFP36-mediated mRNA decay activity, and hence stabilizes MYOD1 mRNA. Phosphorylated by MAPK1 upon mitogen stimulation. Phosphorylated at Ser-66 and Ser-93; these phosphorylations increase in a SH3KBP1-dependent manner. Phosphorylated at serine and threonine residues in a pyruvate kinase PKM- and p38 MAPK-dependent manner. Phosphorylation at Ser-60 may participate in the PKM-mediated degradation of ZFP36 in a p38 MAPK-dependent manner. Dephosphorylated by serine/threonine phosphatase 2A at Ser-186. Ubiquitinated; pyruvate kinase (PKM)-dependent ubiquitination leads to proteasomal degradation through a p38 MAPK signaling pathway. As to expression, expressed in both basal and suprabasal epidermal layers. Expressed in epidermal keratinocytes. Expressed strongly in mature dendritic cells. Expressed in immature dendritic cells (at protein level).

It is found in the nucleus. Its subcellular location is the cytoplasm. It localises to the cytoplasmic granule. The protein resides in the P-body. Zinc-finger RNA-binding protein that destabilizes several cytoplasmic AU-rich element (ARE)-containing mRNA transcripts by promoting their poly(A) tail removal or deadenylation, and hence provide a mechanism for attenuating protein synthesis. Acts as an 3'-untranslated region (UTR) ARE mRNA-binding adapter protein to communicate signaling events to the mRNA decay machinery. Recruits deadenylase CNOT7 (and probably the CCR4-NOT complex) via association with CNOT1, and hence promotes ARE-mediated mRNA deadenylation. Functions also by recruiting components of the cytoplasmic RNA decay machinery to the bound ARE-containing mRNAs. Self regulates by destabilizing its own mRNA. Binds to 3'-UTR ARE of numerous mRNAs and of its own mRNA. Plays a role in anti-inflammatory responses; suppresses tumor necrosis factor (TNF)-alpha production by stimulating ARE-mediated TNF-alpha mRNA decay and several other inflammatory ARE-containing mRNAs in interferon (IFN)- and/or lipopolysaccharide (LPS)-induced macrophages. Also plays a role in the regulation of dendritic cell maturation at the post-transcriptional level, and hence operates as part of a negative feedback loop to limit the inflammatory response. Promotes ARE-mediated mRNA decay of hypoxia-inducible factor HIF1A mRNA during the response of endothelial cells to hypoxia. Positively regulates early adipogenesis of preadipocytes by promoting ARE-mediated mRNA decay of immediate early genes (IEGs). Negatively regulates hematopoietic/erythroid cell differentiation by promoting ARE-mediated mRNA decay of the transcription factor STAT5B mRNA. Plays a role in maintaining skeletal muscle satellite cell quiescence by promoting ARE-mediated mRNA decay of the myogenic determination factor MYOD1 mRNA. Associates also with and regulates the expression of non-ARE-containing target mRNAs at the post-transcriptional level, such as MHC class I mRNAs. Participates in association with argonaute RISC catalytic components in the ARE-mediated mRNA decay mechanism; assists microRNA (miRNA) targeting ARE-containing mRNAs. May also play a role in the regulation of cytoplasmic mRNA decapping; enhances decapping of ARE-containing RNAs, in vitro. Involved in the delivery of target ARE-mRNAs to processing bodies (PBs). In addition to its cytosolic mRNA-decay function, affects nuclear pre-mRNA processing. Negatively regulates nuclear poly(A)-binding protein PABPN1-stimulated polyadenylation activity on ARE-containing pre-mRNA during LPS-stimulated macrophages. Also involved in the regulation of stress granule (SG) and P-body (PB) formation and fusion. Plays a role in the regulation of keratinocyte proliferation, differentiation and apoptosis. Plays a role as a tumor suppressor by inhibiting cell proliferation in breast cancer cells. Functionally, (Microbial infection) Negatively regulates HTLV-1 TAX-dependent transactivation of viral long terminal repeat (LTR) promoter. The protein is mRNA decay activator protein ZFP36 of Homo sapiens (Human).